The sequence spans 261 residues: Thiazole synthase (261 aa).

Catalysis depends on K101, which acts as the Schiff-base intermediate with DXP. Residues G162, 188-189 (AG), and 210-211 (NT) contribute to the 1-deoxy-D-xylulose 5-phosphate site.

It belongs to the ThiG family. As to quaternary structure, homotetramer. Forms heterodimers with either ThiH or ThiS.

It is found in the cytoplasm. It carries out the reaction [ThiS sulfur-carrier protein]-C-terminal-Gly-aminoethanethioate + 2-iminoacetate + 1-deoxy-D-xylulose 5-phosphate = [ThiS sulfur-carrier protein]-C-terminal Gly-Gly + 2-[(2R,5Z)-2-carboxy-4-methylthiazol-5(2H)-ylidene]ethyl phosphate + 2 H2O + H(+). It functions in the pathway cofactor biosynthesis; thiamine diphosphate biosynthesis. Catalyzes the rearrangement of 1-deoxy-D-xylulose 5-phosphate (DXP) to produce the thiazole phosphate moiety of thiamine. Sulfur is provided by the thiocarboxylate moiety of the carrier protein ThiS. In vitro, sulfur can be provided by H(2)S. In Azoarcus sp. (strain BH72), this protein is Thiazole synthase.